We begin with the raw amino-acid sequence, 227 residues long: UPF0758 protein Pcryo_2119 (227 aa).

One can recognise an MPN domain in the interval 102–224 (GLGRSQMVKD…TLSYAENSLP (123 aa)). 3 residues coordinate Zn(2+): histidine 173, histidine 175, and aspartate 186. A JAMM motif motif is present at residues 173 to 186 (HNHPHTDAKPSTAD).

Belongs to the UPF0758 family.

The polypeptide is UPF0758 protein Pcryo_2119 (Psychrobacter cryohalolentis (strain ATCC BAA-1226 / DSM 17306 / VKM B-2378 / K5)).